Here is a 489-residue protein sequence, read N- to C-terminus: Betaine aldehyde dehydrogenase (489 aa).

The K(+) site is built by Thr-26 and Asp-93. Gly-150–Trp-152 contacts NAD(+). The active-site Charge relay system is the Lys-162. An NAD(+)-binding site is contributed by Lys-176–Glu-179. Val-180 provides a ligand contact to K(+). Gly-229–Thr-232 contacts NAD(+). Leu-245 lines the K(+) pocket. Glu-251 acts as the Proton acceptor in catalysis. NAD(+) is bound by residues Gly-253, Cys-285, and Glu-386. Cys-285 acts as the Nucleophile in catalysis. Residue Cys-285 is modified to Cysteine sulfenic acid (-SOH). K(+) contacts are provided by Lys-456 and Gly-459. Glu-463 acts as the Charge relay system in catalysis.

This sequence belongs to the aldehyde dehydrogenase family. As to quaternary structure, dimer of dimers. The cofactor is K(+).

It carries out the reaction betaine aldehyde + NAD(+) + H2O = glycine betaine + NADH + 2 H(+). It participates in amine and polyamine biosynthesis; betaine biosynthesis via choline pathway; betaine from betaine aldehyde: step 1/1. In terms of biological role, involved in the biosynthesis of the osmoprotectant glycine betaine. Catalyzes the irreversible oxidation of betaine aldehyde to the corresponding acid. The protein is Betaine aldehyde dehydrogenase of Burkholderia pseudomallei (strain 1106a).